Here is an 881-residue protein sequence, read N- to C-terminus: Phosphoenolpyruvate carboxylase (881 aa).

Catalysis depends on residues His138 and Lys545.

This sequence belongs to the PEPCase type 1 family. It depends on Mg(2+) as a cofactor.

The enzyme catalyses oxaloacetate + phosphate = phosphoenolpyruvate + hydrogencarbonate. Forms oxaloacetate, a four-carbon dicarboxylic acid source for the tricarboxylic acid cycle. The protein is Phosphoenolpyruvate carboxylase of Shewanella oneidensis (strain ATCC 700550 / JCM 31522 / CIP 106686 / LMG 19005 / NCIMB 14063 / MR-1).